A 291-amino-acid polypeptide reads, in one-letter code: Small ribosomal subunit protein uS3 (291 aa).

The 72-residue stretch at 39 to 110 (IRLEIMKFLK…KISIKIKEVK (72 aa)) folds into the KH type-2 domain.

The protein belongs to the universal ribosomal protein uS3 family. As to quaternary structure, part of the 30S ribosomal subunit. Forms a tight complex with proteins S10 and S14.

Its function is as follows. Binds the lower part of the 30S subunit head. Binds mRNA in the 70S ribosome, positioning it for translation. The sequence is that of Small ribosomal subunit protein uS3 from Borreliella afzelii (strain PKo) (Borrelia afzelii).